Here is a 406-residue protein sequence, read N- to C-terminus: NIPA-like protein 3 (406 aa).

Helical transmembrane passes span 33–53, 76–96, 101–121, and 135–155; these read NLIG…ALNL, WWLG…SYAF, LIVP…IIFI, and ILSF…VTFA. Asparagine 166 is a glycosylation site (N-linked (GlcNAc...) asparagine). The next 5 helical transmembrane spans lie at 171–191, 202–222, 240–260, 271–291, and 300–320; these read LVSW…CLLL, IVVI…TVKA, PIFY…AAFL, LIAS…GAIF, and VLHI…VFLI. Serine 372 is subject to Phosphoserine.

This sequence belongs to the NIPA family.

The protein localises to the membrane. The polypeptide is NIPA-like protein 3 (NIPAL3) (Pongo abelii (Sumatran orangutan)).